The primary structure comprises 548 residues: Luciferin 4-monooxygenase (548 aa).

The Microbody targeting signal motif lies at 546 to 548 (AKM).

This sequence belongs to the ATP-dependent AMP-binding enzyme family. In terms of assembly, homodimer. The cofactor is Mg(2+).

The protein localises to the peroxisome. The enzyme catalyses firefly D-luciferin + ATP + O2 = firefly oxyluciferin + hnu + AMP + CO2 + diphosphate. Its activity is regulated as follows. Inhibited by ATP analogs and sodium deoxycholate. Activated by choline-containing phospholipids. Functionally, produces green light with a wavelength of 570 nm. The protein is Luciferin 4-monooxygenase of Luciola mingrelica (Southern Russian firefly).